Consider the following 117-residue polypeptide: Hydrogenase maturation factor HypA (117 aa).

Residue His2 participates in Ni(2+) binding. Cys73, Cys76, Cys89, and Cys92 together coordinate Zn(2+).

The protein belongs to the HypA/HybF family.

Functionally, involved in the maturation of [NiFe] hydrogenases. Required for nickel insertion into the metal center of the hydrogenase. The protein is Hydrogenase maturation factor HypA of Shewanella baltica (strain OS185).